The sequence spans 345 residues: 3-isopropylmalate dehydrogenase (345 aa).

Substrate-binding residues include R94, R104, R130, and D215. Residues D215, D239, and D243 each coordinate Mg(2+). Position 273 to 285 (273 to 285 (GSAPDIAGKGIAN)) interacts with NAD(+).

Belongs to the isocitrate and isopropylmalate dehydrogenases family. LeuB type 1 subfamily. As to quaternary structure, homodimer. Requires Mg(2+) as cofactor. Mn(2+) is required as a cofactor.

The protein resides in the cytoplasm. It carries out the reaction (2R,3S)-3-isopropylmalate + NAD(+) = 4-methyl-2-oxopentanoate + CO2 + NADH. Its pathway is amino-acid biosynthesis; L-leucine biosynthesis; L-leucine from 3-methyl-2-oxobutanoate: step 3/4. Its function is as follows. Catalyzes the oxidation of 3-carboxy-2-hydroxy-4-methylpentanoate (3-isopropylmalate) to 3-carboxy-4-methyl-2-oxopentanoate. The product decarboxylates to 4-methyl-2 oxopentanoate. The chain is 3-isopropylmalate dehydrogenase (leuB) from Lactococcus lactis subsp. lactis (strain IL1403) (Streptococcus lactis).